A 221-amino-acid polypeptide reads, in one-letter code: Queuosine precursor transporter (221 aa).

At 1 to 12 (MNVFSQTQRYKA) the chain is on the cytoplasmic side. A helical membrane pass occupies residues 13–33 (LFWLSLFHLLVITSSNYLVQL). A topological domain (periplasmic) is located at residue Pro34. A helical transmembrane segment spans residues 35–55 (VSILGFHTTWGAFSFPFIFLA). The Cytoplasmic segment spans residues 56–70 (TDLTVRIFGAPLARR). The chain crosses the membrane as a helical span at residues 71 to 91 (IIFAVMIPALLISYVISSLFY). The Periplasmic portion of the chain corresponds to 92-97 (MGSWQG). Residues 98-118 (FGALAHFNLFVARIATASFMA) traverse the membrane as a helical segment. At 119–143 (YALGQILDVHVFNRLRQSRRWWLAP) the chain is on the cytoplasmic side. Residues 144–164 (TASTLFGNVSDTLAFFFIAFW) form a helical membrane-spanning segment. Topologically, residues 165-184 (RSPDAFMAEHWMEIALVDYC) are periplasmic. The helical transmembrane segment at 185–205 (FKVLISIVFFLPMYGVLLNML) threads the bilayer. Topologically, residues 206 to 221 (LKRLADKSEINALQAS) are cytoplasmic.

Belongs to the vitamin uptake transporter (VUT/ECF) (TC 2.A.88) family. Q precursor transporter subfamily.

It is found in the cell inner membrane. In terms of biological role, involved in the import of queuosine (Q) precursors, required for Q precursor salvage. Transports 7-cyano-7-deazaguanine (preQ(0)) and 7-aminomethyl-7-deazaguanine (preQ(1)), with a preference for preQ(0). This is Queuosine precursor transporter (yhhQ) from Escherichia coli (strain K12).